Here is a 443-residue protein sequence, read N- to C-terminus: Threonine/serine transporter TdcC (443 aa).

The next 11 membrane-spanning stretches (helical) occupy residues Thr22 to Ile42, Ala44 to Phe64, Gly97 to Val117, Val140 to Met160, Val163 to Ile183, Ile207 to Ile227, Ala259 to Ser279, Ala319 to Leu339, Leu366 to Leu386, Ile389 to Ile409, and Asp423 to Phe443.

Belongs to the amino acid/polyamine transporter 2 family. SdaC/TdcC subfamily.

It localises to the cell inner membrane. It catalyses the reaction L-threonine(in) + H(+)(in) = L-threonine(out) + H(+)(out). It carries out the reaction L-serine(in) + H(+)(in) = L-serine(out) + H(+)(out). In terms of biological role, involved in the import of threonine and serine into the cell, with the concomitant import of a proton (symport system). The sequence is that of Threonine/serine transporter TdcC from Klebsiella pneumoniae (strain 342).